The sequence spans 423 residues: Protein phosphatase 2C 77 (423 aa).

Residues 74–95 form a disordered region; sequence GDEINGSDEFDPRSMNQSEKKV. The PPM-type phosphatase domain occupies 112–411; the sequence is LYGVTSICGR…DNISVVVVDL (300 aa). Mg(2+) is bound by residues Asp165, Asp251, and Ser252. A disulfide bond links Cys257 and Cys331. Mg(2+) is bound by residues Asp337 and Asp402.

This sequence belongs to the PP2C family. In terms of assembly, interacts with SPK1, CIPK15/PKS3, GPX3, SCAR1, SCAR2, SCAR3 and SCARL. Also interacts with CIPK24/SOS2. Binds to the fibrillin precursor protein. Interacts with ABA-bounded PYR1, PYL1, PYL2, PYL3, PYL4, PYL5, PYL6, PYL8 and PYL9, and with free PYL2, PYL3 and PYL4. Interacts with and represses GHR1, and, to a lesser extent, SRK2E/OST1. Mg(2+) is required as a cofactor. Requires Mn(2+) as cofactor.

The enzyme catalyses O-phospho-L-seryl-[protein] + H2O = L-seryl-[protein] + phosphate. It carries out the reaction O-phospho-L-threonyl-[protein] + H2O = L-threonyl-[protein] + phosphate. With respect to regulation, phosphatase activity repressed by oxidized ATGPX3, free fatty acids (e.g. arachidonic acid (20:4) and Linolenic acid (18:3)) and by H(2)O(2). Repressed by PYR/PYL/RCAR ABA receptors in an ABA-dependent manner. In terms of biological role, repressor of the abscisic acid (ABA) signaling pathway that regulates numerous ABA responses, such as stomatal closure, osmotic water permeability of the plasma membrane (Pos), high light stress, response to glucose, seed germination and inhibition of vegetative growth. During the stomatal closure regulation, modulates the inward calcium-channel permeability as well as H(2)O(2) and oxidative burst in response to ABA and dehydration. Represses GHR1 and, to some extent, SRK2E/OST1, kinases involved in the regulation of SLAC1-dependent stomatal closure. Controls negatively fibrillin that is involved in mediating ABA-induced photoprotection. May be implicated in ABA content regulation. Involved in acquired thermotolerance of root growth and seedling survival. Required for the Erwinia amylovora harpin-induced (HrpN) drought tolerance. Involved in the hydrotropic response. This is Protein phosphatase 2C 77 from Arabidopsis thaliana (Mouse-ear cress).